The chain runs to 246 residues: uncharacterized protein (246 aa).

10 to 34 (VITGASSGIGEETVNLLSENGAKLV) is a binding site for NADP(+). Residue S140 coordinates substrate. The active-site Proton acceptor is the Y153.

Belongs to the short-chain dehydrogenases/reductases (SDR) family.

This is an uncharacterized protein from Staphylococcus saprophyticus subsp. saprophyticus (strain ATCC 15305 / DSM 20229 / NCIMB 8711 / NCTC 7292 / S-41).